The primary structure comprises 167 residues: Phosphopantetheine adenylyltransferase (167 aa).

Threonine 10 serves as a coordination point for substrate. Residues 10–11 (TF) and histidine 18 each bind ATP. Substrate is bound by residues alanine 77 and arginine 91. Residues 92 to 94 (GLR), glutamate 102, and 127 to 133 (YSFISSS) each bind ATP.

The protein belongs to the bacterial CoaD family. In terms of assembly, homohexamer. Mg(2+) serves as cofactor.

The protein localises to the cytoplasm. The catalysed reaction is (R)-4'-phosphopantetheine + ATP + H(+) = 3'-dephospho-CoA + diphosphate. Its pathway is cofactor biosynthesis; coenzyme A biosynthesis; CoA from (R)-pantothenate: step 4/5. Functionally, reversibly transfers an adenylyl group from ATP to 4'-phosphopantetheine, yielding dephospho-CoA (dPCoA) and pyrophosphate. The polypeptide is Phosphopantetheine adenylyltransferase (Thermomicrobium roseum (strain ATCC 27502 / DSM 5159 / P-2)).